The primary structure comprises 187 residues: dTTP/UTP pyrophosphatase (187 aa).

Aspartate 68 functions as the Proton acceptor in the catalytic mechanism.

Belongs to the Maf family. YhdE subfamily. The cofactor is a divalent metal cation.

The protein localises to the cytoplasm. It catalyses the reaction dTTP + H2O = dTMP + diphosphate + H(+). It carries out the reaction UTP + H2O = UMP + diphosphate + H(+). Its function is as follows. Nucleoside triphosphate pyrophosphatase that hydrolyzes dTTP and UTP. May have a dual role in cell division arrest and in preventing the incorporation of modified nucleotides into cellular nucleic acids. The protein is dTTP/UTP pyrophosphatase of Thermus thermophilus (strain ATCC BAA-163 / DSM 7039 / HB27).